Consider the following 579-residue polypeptide: MMKDEYNSQECMVCSAPADGLHYGAISCRSCNAFFRRTVVEKAEYRCKHTNTCLIDPDGRCACRSCRFTKCIEAGMKIGAVQPRRDPTGSQKERRKRAGGVGEMMSMNNSPLERNGNSFSSDGPTSNSFIVDAIRTDYGFATPRRISTDYSNSPDRYRKYVKIELDDEPIPSTSSAPEKQSCQSSPNDDEQQEFNHLVYAFGEHQRMMQLSFSTFEQFLDEHSNGPKLRRMDPLDVSKLSAVELTGLLYWIEKQQPYGELPVEDRSSLLKRYSVRKLSLDHFYSASKHPEYCARGEFVMNNFTFVPADRTGFELPDDDPHQIQAKREHCRTFAPTFNRFWKNVIRPFVLMKVNDAEVVFLHIMLLWSVTNNEHVTEDTRKVMKQRRDWAMNRLFDWYNEHGTSDPPLRFGQMILLLGEIELICDMHCQDFQVAKLFEFCDMSKFWYETLCYAPCNTNVLKFDPNLLENLKRFTAISVMENNGGLRPFVKTEIKQDPVLYSSPEVIAPESCYNDYQTVDIPVDCNPHTEPVSMDPNLANIDPAVLVFNAHMLPSVMAPLPDDADYHRPQLYHTQSEEVMT.

Residues 8 to 83 constitute a DNA-binding region (nuclear receptor); that stretch reads SQECMVCSAP…AGMKIGAVQP (76 aa). 2 consecutive NR C4-type zinc fingers follow at residues 11–31 and 47–71; these read CMVC…CRSC and CKHT…FTKC. Disordered regions lie at residues 82–124 and 168–189; these read QPRR…SDGP and EPIP…PNDD. Polar residues-rich tracts occupy residues 106–124 and 171–186; these read SMNN…SDGP and PSTS…QSSP. Residues 189 to 452 enclose the NR LBD domain; it reads DEQQEFNHLV…KFWYETLCYA (264 aa).

Belongs to the nuclear hormone receptor family.

The protein resides in the nucleus. Orphan nuclear receptor. The chain is Nuclear hormone receptor family member nhr-71 (nhr-71) from Caenorhabditis elegans.